The following is a 162-amino-acid chain: Cytochrome c-type biogenesis protein CcmE (162 aa).

The Cytoplasmic segment spans residues 1-8 (MNPVRKKR). Residues 9 to 29 (LIIVLAIVVGVGAAVGLALSA) traverse the membrane as a helical; Signal-anchor for type II membrane protein segment. The Periplasmic segment spans residues 30 to 162 (LQQNINLFYT…GETSYNQEGK (133 aa)). The heme site is built by histidine 124 and tyrosine 128. Positions 139 to 148 (DSGQLKHYEN) are enriched in basic and acidic residues. The tract at residues 139-162 (DSGQLKHYENGKAAGETSYNQEGK) is disordered.

The protein belongs to the CcmE/CycJ family.

The protein localises to the cell inner membrane. In terms of biological role, heme chaperone required for the biogenesis of c-type cytochromes. Transiently binds heme delivered by CcmC and transfers the heme to apo-cytochromes in a process facilitated by CcmF and CcmH. The chain is Cytochrome c-type biogenesis protein CcmE from Pseudomonas aeruginosa (strain LESB58).